Reading from the N-terminus, the 922-residue chain is TBC1 domain family member 2A (922 aa).

Residues 1–37 form a disordered region; that stretch reads MEDAPERTPSSSESTQPPGLAREPEVVSPGDSEGCAR. An interaction with CADH1 region spans residues 1-168; the sequence is MEDAPERTPS…AENGPTLHLK (168 aa). Residues 8–17 are compositionally biased toward polar residues; the sequence is TPSSSESTQP. The 99-residue stretch at 43–141 folds into the PH domain; that stretch reads PKKLCGYLSK…WLQQLQMKRW (99 aa). The disordered stretch occupies residues 228-297; sequence NKQAQAAAHG…KRQSNTFPFF (70 aa). The segment covering 262–271 has biased composition (basic and acidic residues); sequence LPEKEPEDPA. Positions 275-295 are enriched in polar residues; it reads PRSSVPSGPTQKPKRQSNTFP. Positions 298 to 435 are interaction with RAC1; the sequence is SDGLARSRTA…QKLTEDLAQP (138 aa). 3 coiled-coil regions span residues 302–333, 362–417, and 443–476; these read ARSR…ELVI, LELV…NHAK, and FLSQ…QVTK. Positions 619-811 constitute a Rab-GAP TBC domain; that stretch reads GVPREHRPRV…RVWDAFLYEG (193 aa). Residues 869–904 are a coiled coil; the sequence is MKQLRQLRAAHRERLEAELRELELLKVEYLQRRASL. At Ser914 the chain carries Phosphoserine.

In terms of assembly, interacts with activated RAC1 and CDH1.

It localises to the cytoplasm. The protein localises to the cytoplasmic vesicle. The protein resides in the cell junction. Its function is as follows. Acts as a GTPase-activating protein for RAB7A. Signal effector acting as a linker between RAC1 and RAB7A, leading to RAB7A inactivation and subsequent inhibition of cadherin degradation and reduced cell-cell adhesion. The chain is TBC1 domain family member 2A (Tbc1d2) from Mus musculus (Mouse).